The chain runs to 147 residues: ATP synthase subunit 9, mitochondrial (147 aa).

A mitochondrion-targeting transit peptide spans 1–66; that stretch reads MASTRVLASR…TTRQAFQKRA (66 aa). A run of 2 helical transmembrane segments spans residues 86 to 106 and 123 to 143; these read SAAIGLTGAGIGIGLVFAALL and AILGFAFVEAIGLFDLMVALM.

The protein belongs to the ATPase C chain family. As to quaternary structure, F-type ATPases have 2 components, CF(1) - the catalytic core - and CF(0) - the membrane proton channel. CF(1) has five subunits: alpha(3), beta(3), gamma(1), delta(1), epsilon(1). CF(0) has three main subunits: a, b and c.

It is found in the mitochondrion membrane. In terms of biological role, mitochondrial membrane ATP synthase (F(1)F(0) ATP synthase or Complex V) produces ATP from ADP in the presence of a proton gradient across the membrane which is generated by electron transport complexes of the respiratory chain. F-type ATPases consist of two structural domains, F(1) - containing the extramembraneous catalytic core and F(0) - containing the membrane proton channel, linked together by a central stalk and a peripheral stalk. During catalysis, ATP synthesis in the catalytic domain of F(1) is coupled via a rotary mechanism of the central stalk subunits to proton translocation. Part of the complex F(0) domain. A homomeric c-ring of probably 10 subunits is part of the complex rotary element. This is ATP synthase subunit 9, mitochondrial (oli) from Neurospora crassa (strain ATCC 24698 / 74-OR23-1A / CBS 708.71 / DSM 1257 / FGSC 987).